The sequence spans 130 residues: UPF0102 protein RPA0323 (130 aa).

Belongs to the UPF0102 family.

In Rhodopseudomonas palustris (strain ATCC BAA-98 / CGA009), this protein is UPF0102 protein RPA0323.